Here is a 126-residue protein sequence, read N- to C-terminus: Large ribosomal subunit protein bL17 (126 aa).

Belongs to the bacterial ribosomal protein bL17 family. Part of the 50S ribosomal subunit. Contacts protein L32.

This Aliivibrio fischeri (strain ATCC 700601 / ES114) (Vibrio fischeri) protein is Large ribosomal subunit protein bL17.